A 209-amino-acid polypeptide reads, in one-letter code: Ribosomal RNA small subunit methyltransferase G (209 aa).

Residues G71, F76, 122–123 (AE), and R135 contribute to the S-adenosyl-L-methionine site.

The protein belongs to the methyltransferase superfamily. RNA methyltransferase RsmG family.

It localises to the cytoplasm. Functionally, specifically methylates the N7 position of a guanine in 16S rRNA. The polypeptide is Ribosomal RNA small subunit methyltransferase G (Flavobacterium psychrophilum (strain ATCC 49511 / DSM 21280 / CIP 103535 / JIP02/86)).